The chain runs to 346 residues: Phosphoribosylformylglycinamidine cyclo-ligase (346 aa).

Belongs to the AIR synthase family.

The protein localises to the cytoplasm. The catalysed reaction is 2-formamido-N(1)-(5-O-phospho-beta-D-ribosyl)acetamidine + ATP = 5-amino-1-(5-phospho-beta-D-ribosyl)imidazole + ADP + phosphate + H(+). It functions in the pathway purine metabolism; IMP biosynthesis via de novo pathway; 5-amino-1-(5-phospho-D-ribosyl)imidazole from N(2)-formyl-N(1)-(5-phospho-D-ribosyl)glycinamide: step 2/2. The polypeptide is Phosphoribosylformylglycinamidine cyclo-ligase (Polaromonas sp. (strain JS666 / ATCC BAA-500)).